The following is a 3914-amino-acid chain: Trichosetin synthetase PKS-NRPS1 (3914 aa).

The region spanning 4–420 is the Ketosynthase family 3 (KS3) domain; it reads NEPIAIIGSA…GTNAHAIIEA (417 aa). Catalysis depends on for beta-ketoacyl synthase activity residues C177, H301, and H340. Residues 525-847 form a malonyl-CoA:ACP transacylase (MAT) domain region; sequence VLTGQGAQWP…REKDDIQQFA (323 aa). The N-terminal hotdog fold stretch occupies residues 913–1047; the sequence is HPILGRRCHD…AHVKASLSVP (135 aa). Positions 913 to 1214 are dehydratase (DH) domain; sequence HPILGRRCHD…MELVPFSPAT (302 aa). In terms of domain architecture, PKS/mFAS DH spans 913-1216; that stretch reads HPILGRRCHD…LVPFSPATPE (304 aa). H946 serves as the catalytic Proton acceptor; for dehydratase activity. Positions 1062–1216 are C-terminal hotdog fold; the sequence is LRKVEVDRFY…LVPFSPATPE (155 aa). The Proton donor; for dehydratase activity role is filled by D1122. The tract at residues 1364–1593 is methyltransferase (MT) domain; sequence EGFGLDLVNK…DLPETKSTEL (230 aa). Residues 2083 to 2255 form a ketoreductase (KR) domain region; that stretch reads TFLLIGLSGE…VAASSIDISS (173 aa). In terms of domain architecture, Carrier 1 spans 2356 to 2436; it reads LADVKTKADA…DLIEESLNLI (81 aa). S2396 carries the O-(pantetheine 4'-phosphoryl)serine modification. A disordered region spans residues 2447–2518; sequence EAGSTPTTQP…DSTDNSTPLK (72 aa). Residues 2481 to 2500 are compositionally biased toward polar residues; sequence QQTGSDSSRSPIDTPLTSME. The segment at 2529 to 2956 is condensation (C) domain; that stretch reads SYGQAGFWFL…VQGTNKAADT (428 aa). The interval 2991 to 3388 is adenylation (A) (KR) domain; it reads QTIQANSTKV…LLFCDGRLED (398 aa). The Carrier 2 domain maps to 3502 to 3579; the sequence is GTLTVAEQRL…TMAVVLESCG (78 aa). An O-(pantetheine 4'-phosphoryl)serine modification is found at S3539. Residues 3615–3831 form a reductase (RED) domain region; the sequence is LTGSAGYLGR…VLPTGDIVKA (217 aa).

In the C-terminal section; belongs to the NRP synthetase family.

The enzyme catalyses L-serine + 7 malonyl-CoA + acetyl-CoA + 2 S-adenosyl-L-methionine + ATP + 8 NADPH + 11 H(+) = (5S)-3-[(2E,6R,8E,10E,12E)-2,6-dimethyltetradeca-2,8,10,12-tetraenoyl]-5-(hydroxymethyl)pyrrolidine-2,4-dione + AMP + 2 S-adenosyl-L-homocysteine + 7 CO2 + diphosphate + 8 NADP(+) + 8 CoA + 6 H2O. Its pathway is mycotoxin biosynthesis. Hybrid PKS-NRPS synthetase; part of the gene cluster that mediates the biosynthesis of trichosetin, a trans-fused decalin-containing tetramic acid with antimicrobial activity. The PKS module of PKS-NRPS1 together with the enoylreductase (ER) catalyze the formation of the polyketide unit which is then conjugated to L-serine by the condensation domain of the PKS-NRPS1 NRPS module. Activity of the Dieckmann cyclase domain (RED) results in release of the Dieckmann product intermediate. Diels-Alderase (DA) is involved in endo-selective Diels-Alder cycloaddition to form the decalin ring, leading to the production of N-desmethylequisetin also called trichosetin. The cluster does not contain the equisetin N-methyltransferase and consequently, trichosetin is isolated as final product. The chain is Trichosetin synthetase PKS-NRPS1 from Gibberella fujikuroi (strain CBS 195.34 / IMI 58289 / NRRL A-6831) (Bakanae and foot rot disease fungus).